We begin with the raw amino-acid sequence, 500 residues long: MKVSLSFLLTILIVIITIKVNLSQEIKISPFFANNLKFEPIPDYIEYDSDSDAGEALFLSNYLDDHKTAKQKSCVDIGAPFQSCDKLLEIDSNLRDTEDFFTFTGFITVNETYNSNTFFWFLESQNGDKNSPLVIFLQGGPGGASTFSLFVETGPYELLDNFTLVQREITWNSEFAMLYIDNPVGTGFSFTDSQEGYSNNEDEIATNLYTFLQQFYKLYPEYYTNELYITGESYAGKYIPAFSYHIIQQNQNSNNPNINLKGIAIGDGLCDPITQVTQYANLAFYTGLADLQQQEVMFEYQDKIVEAINQEQWSVANDLFTDLINGPPDYFQNITGESDYYDIRKTVEPTYGGDFTAFLNQSSIRAMIHVGNNYFQNNNDVYIHLEQDIPKSVKQLFPTILDNIKVILYNGQFDFIVGPSLTETMIRTIEWEGIQPFLESPKIIWKIPSDNVDVAGFVRQWNSFTQVVVRQAGHMVPLDQPARAFDMIDRFINNEPFPSG.

An N-terminal signal peptide occupies residues 1-23 (MKVSLSFLLTILIVIITIKVNLS). N-linked (GlcNAc...) asparagine glycans are attached at residues Asn-110 and Asn-161. Residue Ser-233 is part of the active site. Residues Asn-333 and Asn-360 are each glycosylated (N-linked (GlcNAc...) asparagine). Active-site residues include Asp-414 and His-474.

This sequence belongs to the peptidase S10 family.

The protein resides in the secreted. Functionally, may be involved in the digestion of phagocytosed particles in the lysosome, participation in an inflammatory protease cascade, and trimming of peptides for antigen presentation. The sequence is that of Probable serine carboxypeptidase CPVL (cpvl) from Dictyostelium discoideum (Social amoeba).